The primary structure comprises 146 residues: Hemoglobin subunit beta (146 aa).

Residue valine 1 is modified to N-acetylvaline. One can recognise a Globin domain in the interval 2–146 (HLTPEEKVAV…VANALAHKYH (145 aa)). Threonine 12 carries the post-translational modification Phosphothreonine. Serine 44 bears the Phosphoserine mark. At lysine 59 the chain carries N6-acetyllysine. Histidine 63 provides a ligand contact to heme b. Residue lysine 82 is modified to N6-acetyllysine. Histidine 92 contributes to the heme b binding site. Residue cysteine 93 is modified to S-nitrosocysteine. Lysine 144 is modified (N6-acetyllysine).

This sequence belongs to the globin family. In terms of assembly, heterotetramer of two alpha chains and two beta chains. Red blood cells.

Involved in oxygen transport from the lung to the various peripheral tissues. The protein is Hemoglobin subunit beta (HBB) of Cercocebus atys (Sooty mangabey).